Here is a 173-residue protein sequence, read N- to C-terminus: Ribosome maturation factor RimM (173 aa).

The PRC barrel domain maps to 102–173; sequence EGEYYWSDLI…TMLVDWDPEF (72 aa).

It belongs to the RimM family. Binds ribosomal protein uS19.

The protein localises to the cytoplasm. An accessory protein needed during the final step in the assembly of 30S ribosomal subunit, possibly for assembly of the head region. Essential for efficient processing of 16S rRNA. May be needed both before and after RbfA during the maturation of 16S rRNA. It has affinity for free ribosomal 30S subunits but not for 70S ribosomes. This is Ribosome maturation factor RimM from Methylobacillus flagellatus (strain ATCC 51484 / DSM 6875 / VKM B-1610 / KT).